The sequence spans 101 residues: Small ribosomal subunit protein uS14A (101 aa).

Positions A29–H73 are disordered. Residues R61–P70 are compositionally biased toward basic and acidic residues.

Belongs to the universal ribosomal protein uS14 family. As to quaternary structure, part of the 30S ribosomal subunit. Contacts proteins S3 and S10.

Binds 16S rRNA, required for the assembly of 30S particles and may also be responsible for determining the conformation of the 16S rRNA at the A site. This chain is Small ribosomal subunit protein uS14A, found in Mycolicibacterium gilvum (strain PYR-GCK) (Mycobacterium gilvum (strain PYR-GCK)).